The following is a 148-amino-acid chain: Ribonuclease H (148 aa).

One can recognise an RNase H type-1 domain in the interval methionine 1 to aspartate 142. Mg(2+) contacts are provided by aspartate 10, glutamate 48, aspartate 70, and aspartate 134. The segment at glycine 129–arginine 148 is disordered.

The protein belongs to the RNase H family. Monomer. The cofactor is Mg(2+).

The protein localises to the cytoplasm. The catalysed reaction is Endonucleolytic cleavage to 5'-phosphomonoester.. In terms of biological role, endonuclease that specifically degrades the RNA of RNA-DNA hybrids. The chain is Ribonuclease H from Pseudomonas entomophila (strain L48).